The chain runs to 553 residues: Nucleoside-diphosphatase mig-23 (553 aa).

The Cytoplasmic portion of the chain corresponds to 1-8; that stretch reads MRVSRRFT. A helical transmembrane segment spans residues 9 to 29; the sequence is ILAITAMIFLSLIICIYAVAA. Topologically, residues 30–489 are lumenal; sequence HTTVNVILQK…IVKETHSASE (460 aa). Glu-174 acts as the Proton acceptor in catalysis. Residues Asn-190 and Asn-284 are each glycosylated (N-linked (GlcNAc...) asparagine). A helical transmembrane segment spans residues 490-510; that stretch reads SLWAPLFFLSAVFCLFVLVCA. The Cytoplasmic segment spans residues 511-553; that stretch reads KEHSLLCFDDKRRASFGLTRRQYSYKMLKEDRTSSSAFLENFA.

The protein belongs to the GDA1/CD39 NTPase family.

It localises to the golgi apparatus membrane. The catalysed reaction is a ribonucleoside 5'-diphosphate + H2O = a ribonucleoside 5'-phosphate + phosphate + H(+). Seems to be able to hydrolyze ADP, UDP and GDP. Supports mig-17 glycosylation and surface expression, which is required for proper migration of distal tip cells during gonad morphogenesis. The polypeptide is Nucleoside-diphosphatase mig-23 (Caenorhabditis briggsae).